The sequence spans 138 residues: Protein FAM136A (138 aa).

At Ala2 the chain carries N-acetylalanine. Residues Thr124 and Thr126 each carry the phosphothreonine modification.

The protein belongs to the FAM136 family.

This Homo sapiens (Human) protein is Protein FAM136A (FAM136A).